A 685-amino-acid chain; its full sequence is Mannan-binding lectin serine protease 2 (685 aa).

The signal sequence occupies residues Met-1–Gly-19. The CUB 1 domain maps to Ser-20–Glu-137. 2 residues coordinate Ca(2+): Glu-67 and Asp-75. Cysteines 72 and 90 form a disulfide. Asn-103 carries an N-linked (GlcNAc...) asparagine glycan. Ca(2+) is bound by residues Asp-120, Ser-122, Asn-123, Asp-138, and Glu-141. The EGF-like; calcium-binding domain occupies Asp-138–Ser-181. 5 cysteine pairs are disulfide-bonded: Cys-142/Cys-156, Cys-152/Cys-165, Cys-167/Cys-180, Cys-184/Cys-211, and Cys-241/Cys-259. Ca(2+) contacts are provided by Asn-158 and Gly-162. The residue at position 158 (Asn-158) is a (3R)-3-hydroxyasparagine. The CUB 2 domain occupies Cys-184–Thr-296. N-linked (GlcNAc...) asparagine glycans are attached at residues Asn-285 and Asn-308. Sushi domains follow at residues Arg-298–Ile-363 and Ile-364–Pro-431. 7 disulfide bridges follow: Cys-300–Cys-348, Cys-328–Cys-361, Cys-366–Cys-411, Cys-396–Cys-429, Cys-433–Cys-552, Cys-598–Cys-617, and Cys-628–Cys-659. Residues Ile-444–Ser-683 form the Peptidase S1 domain. Residues His-483 and Asp-532 each act as charge relay system in the active site. Asn-545 carries an N-linked (GlcNAc...) asparagine glycan. Ser-632 acts as the Charge relay system in catalysis. N-linked (GlcNAc...) asparagine glycosylation occurs at Asn-641.

The protein belongs to the peptidase S1 family. Homodimer; disulfide-linked. Binds MBL2. Isoform 2 binds to MASP1. Binds SERPING1. In terms of processing, the iron and 2-oxoglutarate dependent 3-hydroxylation of aspartate and asparagine is (R) stereospecific within EGF domains. As to expression, plasma.

It localises to the secreted. The catalysed reaction is Selective cleavage after Arg-223 in complement component C2 (-Ser-Leu-Gly-Arg-|-Lys-Ile-Gln-Ile) and after Arg-76 in complement component C4 (-Gly-Leu-Gln-Arg-|-Ala-Leu-Glu-Ile).. Its function is as follows. Serum protease that plays an important role in the activation of the complement system via mannose-binding lectin. After activation by auto-catalytic cleavage it cleaves C2 and C4, leading to their activation and to the formation of C3 convertase. The sequence is that of Mannan-binding lectin serine protease 2 (Masp2) from Mus musculus (Mouse).